Consider the following 202-residue polypeptide: Myosin regulatory light chain 10 (202 aa).

Residues 1 to 21 (MGQSSLDHGVQGPVAGTGDFG) form a disordered region. EF-hand domains follow at residues 60–95 (SQIQEFKEAFTIMDQNRDGFIDKEDLRDTFAALGRI), 130–165 (DPEETILHAFKVFDTEGKGFVKADFIKEKLMTQADR), and 166–201 (FSEEEVKQMFAAFPPDVCGNLDYRNLCYVITHGEEK). Residues Asp73, Asn75, Asp77, and Asp84 each contribute to the Ca(2+) site.

Myosin is a hexamer of 2 heavy chains and 4 light chains. Specifically expressed in precursor B- and T-lymphocytes.

The protein is Myosin regulatory light chain 10 (Myl10) of Mus musculus (Mouse).